A 270-amino-acid chain; its full sequence is Protein N-terminal and lysine N-methyltransferase EFM7 (270 aa).

Residues methionine 1–lysine 45 form a disordered region. Residues tryptophan 63, glycine 89–alanine 91, aspartate 111, tryptophan 158, and serine 182 contribute to the S-adenosyl-L-methionine site.

The protein belongs to the class I-like SAM-binding methyltransferase superfamily. EFM7 family.

The protein resides in the cytoplasm. In terms of biological role, S-adenosyl-L-methionine-dependent protein methyltransferase that trimethylates the N-terminal glycine 'Gly-2' of elongation factor 1-alpha, before also catalyzing the mono- and dimethylation of 'Lys-3'. This is Protein N-terminal and lysine N-methyltransferase EFM7 from Kluyveromyces lactis (strain ATCC 8585 / CBS 2359 / DSM 70799 / NBRC 1267 / NRRL Y-1140 / WM37) (Yeast).